A 362-amino-acid chain; its full sequence is Glycyl-glycine endopeptidase ALE-1 (362 aa).

Positions methionine 1–alanine 35 are cleaved as a signal peptide. Residues alanine 35–glutamate 110 are disordered. Positions aspartate 40–glutamate 110 are enriched in basic and acidic residues. 2 residues coordinate Zn(2+): histidine 150 and aspartate 154. Histidine 231 is a catalytic residue. Histidine 233 is a Zn(2+) binding site. One can recognise an SH3b domain in the interval serine 282 to serine 350.

The protein belongs to the peptidase M23B family. The cofactor is Zn(2+).

It localises to the secreted. It carries out the reaction Hydrolysis of the -Gly-|-Gly- bond in the pentaglycine inter-peptide link joining staphylococcal cell wall peptidoglycans.. In terms of biological role, lyses staphylococcal cells by hydrolyzing the polyglycine interpeptide bridges of the peptidoglycan. This is Glycyl-glycine endopeptidase ALE-1 from Staphylococcus capitis.